We begin with the raw amino-acid sequence, 167 residues long: Ribosome maturation factor RimM (167 aa).

Positions 94 to 165 (ENEYYYSDII…TIRITPMEGL (72 aa)) constitute a PRC barrel domain.

This sequence belongs to the RimM family. As to quaternary structure, binds ribosomal protein uS19.

It is found in the cytoplasm. An accessory protein needed during the final step in the assembly of 30S ribosomal subunit, possibly for assembly of the head region. Essential for efficient processing of 16S rRNA. May be needed both before and after RbfA during the maturation of 16S rRNA. It has affinity for free ribosomal 30S subunits but not for 70S ribosomes. The sequence is that of Ribosome maturation factor RimM from Staphylococcus haemolyticus (strain JCSC1435).